A 157-amino-acid chain; its full sequence is Peptide methionine sulfoxide reductase MsrA (157 aa).

Residue Cys-10 is part of the active site.

It belongs to the MsrA Met sulfoxide reductase family.

The catalysed reaction is L-methionyl-[protein] + [thioredoxin]-disulfide + H2O = L-methionyl-(S)-S-oxide-[protein] + [thioredoxin]-dithiol. The enzyme catalyses [thioredoxin]-disulfide + L-methionine + H2O = L-methionine (S)-S-oxide + [thioredoxin]-dithiol. In terms of biological role, has an important function as a repair enzyme for proteins that have been inactivated by oxidation. Catalyzes the reversible oxidation-reduction of methionine sulfoxide in proteins to methionine. The chain is Peptide methionine sulfoxide reductase MsrA from Clostridium botulinum (strain Okra / Type B1).